Consider the following 301-residue polypeptide: Pseudouridine-5'-phosphate glycosidase (301 aa).

Catalysis depends on Glu23, which acts as the Proton donor. Substrate is bound by residues Lys84 and Val104. Residue Asp136 participates in Mn(2+) binding. A substrate-binding site is contributed by 138-140; sequence SRD. Lys157 functions as the Nucleophile in the catalytic mechanism.

Belongs to the pseudouridine-5'-phosphate glycosidase family. In terms of assembly, homotrimer. It depends on Mn(2+) as a cofactor.

It carries out the reaction D-ribose 5-phosphate + uracil = psi-UMP + H2O. In terms of biological role, catalyzes the reversible cleavage of pseudouridine 5'-phosphate (PsiMP) to ribose 5-phosphate and uracil. Functions biologically in the cleavage direction, as part of a pseudouridine degradation pathway. In Mycoplasmopsis agalactiae (strain NCTC 10123 / CIP 59.7 / PG2) (Mycoplasma agalactiae), this protein is Pseudouridine-5'-phosphate glycosidase.